The primary structure comprises 316 residues: Pantothenate kinase (316 aa).

Glycine 95–serine 102 serves as a coordination point for ATP.

The protein belongs to the prokaryotic pantothenate kinase family.

It localises to the cytoplasm. It catalyses the reaction (R)-pantothenate + ATP = (R)-4'-phosphopantothenate + ADP + H(+). The protein operates within cofactor biosynthesis; coenzyme A biosynthesis; CoA from (R)-pantothenate: step 1/5. The protein is Pantothenate kinase of Shewanella halifaxensis (strain HAW-EB4).